Here is a 70-residue protein sequence, read N- to C-terminus: Conotoxin Lt11.6 (70 aa).

An N-terminal signal peptide occupies residues 1-26 (MMFRLTSVGSFLLVIVFLNLVVLTNA). Intrachain disulfides connect Cys27–Cys41, Cys34–Cys46, Cys40–Cys50, and Cys45–Cys54. The propeptide occupies 58 to 70 (AQRQKLLRSFGQR).

The protein belongs to the conotoxin I2 superfamily. As to expression, expressed by the venom duct.

It is found in the secreted. This Conus litteratus (Lettered cone) protein is Conotoxin Lt11.6.